The chain runs to 153 residues: ORM1-like protein 3 (153 aa).

The tract at residues 1-17 (MNVGTAHSEVNPNTRVM) is important for ceramide level-sensing. The Cytoplasmic portion of the chain corresponds to 1-21 (MNVGTAHSEVNPNTRVMNSRG). Transmembrane regions (helical) follow at residues 22–42 (IWLS…SIPF) and 43–63 (VSVP…MYIF). Residues 64-94 (LHTVKGTPFETPDQGKARLLTHWEQMDYGVQ) lie on the Cytoplasmic side of the membrane. The helical transmembrane segment at 95-117 (FTASRKFLTITPIVLYFLTSFYT) threads the bilayer. Topologically, residues 118–121 (KYDQ) are extracellular. A helical membrane pass occupies residues 122-142 (IHFILNTVSLMSVLIPKLPQL). Pro-137 is subject to Hydroxyproline. Residues 143-153 (HGVRIFGINKY) lie on the Cytoplasmic side of the membrane.

The protein belongs to the ORM family. As to quaternary structure, ceramide-sensitive subunit of the serine palmitoyltransferase (SPT) complex, which is also composed of SPTLC1, SPTLC2/3 and SPTSSA/B. Post-translationally, when hydroxylated at Pro-137, ubiquitinated via 'Lys-48'-linkage, leading to proteasomal degradation. In endothelial cells, ORMDL3 proteasomal degradation is controlled by the sphingosine 1-phosphate receptor signaling pathway.

The protein localises to the endoplasmic reticulum membrane. Its function is as follows. Plays an essential role in the homeostatic regulation of sphingolipid de novo biosynthesis by modulating the activity of the serine palmitoyltransferase (SPT) in response to ceramide levels. When complexed to SPT, the binding of ceramides to its N-terminus stabilizes a conformation that block SPT substrate entry, hence preventing SPT catalytic activity. Through this mechanism, maintains ceramide levels at sufficient concentrations for the production of complex sphingolipids, but which prevents the accumulation of ceramides to levels that trigger apoptosis. The chain is ORM1-like protein 3 (ORMDL3) from Bos taurus (Bovine).